The primary structure comprises 240 residues: 45 kDa antigen (240 aa).

2 Fibronectin type-III domains span residues 1–109 (EFPD…FHTL) and 110–210 (ANGT…KSGH).

The polypeptide is 45 kDa antigen (Taenia ovis (Sheep tapeworm)).